The following is a 1070-amino-acid chain: DNA-directed RNA polymerase subunit beta (1070 aa).

This sequence belongs to the RNA polymerase beta chain family. In plastids the minimal PEP RNA polymerase catalytic core is composed of four subunits: alpha, beta, beta', and beta''. When a (nuclear-encoded) sigma factor is associated with the core the holoenzyme is formed, which can initiate transcription.

Its subcellular location is the plastid. The protein localises to the chloroplast. The catalysed reaction is RNA(n) + a ribonucleoside 5'-triphosphate = RNA(n+1) + diphosphate. In terms of biological role, DNA-dependent RNA polymerase catalyzes the transcription of DNA into RNA using the four ribonucleoside triphosphates as substrates. This Dioscorea elephantipes (Elephant's foot yam) protein is DNA-directed RNA polymerase subunit beta.